We begin with the raw amino-acid sequence, 237 residues long: Phosphoribosylaminoimidazole-succinocarboxamide synthase (237 aa).

The protein belongs to the SAICAR synthetase family.

The enzyme catalyses 5-amino-1-(5-phospho-D-ribosyl)imidazole-4-carboxylate + L-aspartate + ATP = (2S)-2-[5-amino-1-(5-phospho-beta-D-ribosyl)imidazole-4-carboxamido]succinate + ADP + phosphate + 2 H(+). Its pathway is purine metabolism; IMP biosynthesis via de novo pathway; 5-amino-1-(5-phospho-D-ribosyl)imidazole-4-carboxamide from 5-amino-1-(5-phospho-D-ribosyl)imidazole-4-carboxylate: step 1/2. The polypeptide is Phosphoribosylaminoimidazole-succinocarboxamide synthase (Klebsiella pneumoniae (strain 342)).